A 235-amino-acid polypeptide reads, in one-letter code: Cytidylate kinase (235 aa).

Residue 11–19 participates in ATP binding; it reads GPSGVGKST.

Belongs to the cytidylate kinase family. Type 1 subfamily.

Its subcellular location is the cytoplasm. It carries out the reaction CMP + ATP = CDP + ADP. It catalyses the reaction dCMP + ATP = dCDP + ADP. The chain is Cytidylate kinase from Syntrophotalea carbinolica (strain DSM 2380 / NBRC 103641 / GraBd1) (Pelobacter carbinolicus).